Reading from the N-terminus, the 960-residue chain is MWRLRRAAVACEVCQSLVKHSSGIKGSLPLQKLHLVSRSIYHSHHPTLKLQRPQLRTSFQQFSSLTNLPLRKLKFSPIKYGYQPRRNFWPARLATRLLKLRYLILGSAVGGGYTAKKTFDQWKDMIPDLSEYKWIVPDIVWEIDEYIDFEKIRKALPSSEDLVKLAPDFDKIVESLSLLKDFFTSGSPEETAFRATDRGSESDKHFRKVSDKEKIDQLQEELLHTQLKYQRILERLEKENKELRKLVLQKDDKGIHHRKLKKSLIDMYSEVLDVLSDYDASYNTQDHLPRVVVVGDQSAGKTSVLEMIAQARIFPRGSGEMMTRSPVKVTLSEGPHHVALFKDSSREFDLTKEEDLAALRHEIELRMRKNVKEGCTVSPETISLNVKGPGLQRMVLVDLPGVINTVTSGMAPDTKETIFSISKAYMQNPNAIILCIQDGSVDAERSIVTDLVSQMDPHGRRTIFVLTKVDLAEKNVASPSRIQQIIEGKLFPMKALGYFAVVTGKGNSSESIEAIREYEEEFFQNSKLLKTSMLKAHQVTTRNLSLAVSDCFWKMVRESVEQQADSFKATRFNLETEWKNNYPRLRELDRNELFEKAKNEILDEVISLSQVTPKHWEEILQQSLWERVSTHVIENIYLPAAQTMNSGTFNTTVDIKLKQWTDKQLPNKAVEVAWETLQEEFSRFMTEPKGKEHDDIFDKLKEAVKEESIKRHKWNDFAEDSLRVIQHNALEDRSISDKQQWDAAIYFMEEALQARLKDTENAIENMVGPDWKKRWLYWKNRTQEQCVHNETKNELEKMLKCNEEHPAYLASDEITTVRKNLESRGVEVDPSLIKDTWHQVYRRHFLKTALNHCNLCRRGFYYYQRHFVDSELECNDVVLFWRIQRMLAITANTLRQQLTNTEVRRLEKNVKEVLEDFAEDGEKKIKLLTGKRVQLAEDLKKVREIQEKLDAFIEALHQEK.

A mitochondrion-targeting transit peptide spans 1–87 (MWRLRRAAVA…IKYGYQPRRN (87 aa)). Topologically, residues 88–96 (FWPARLATR) are mitochondrial matrix. The chain crosses the membrane as a helical span at residues 97–113 (LLKLRYLILGSAVGGGY). Over 114–770 (TAKKTFDQWK…NAIENMVGPD (657 aa)) the chain is Mitochondrial intermembrane. Short sequence motifs (LQQQIQ motif) lie at residues 181–186 (DFFTSG) and 217–222 (QLQEEL). Residues 210-254 (SDKEKIDQLQEELLHTQLKYQRILERLEKENKELRKLVLQKDDKG) adopt a coiled-coil conformation. At K228 the chain carries N6-acetyllysine. The LQQQIQ motif motif lies at 235–240 (RLEKEN). Residues 285–561 (QDHLPRVVVV…FWKMVRESVE (277 aa)) form the Dynamin-type G domain. A G1 motif region spans residues 295 to 302 (GDQSAGKT). GTP contacts are provided by S298, G300, K301, T302, S303, and G317. T302 is a binding site for Mg(2+). Residues 321 to 324 (MMTR) are G2 motif. Positions 323 and 398 each coordinate Mg(2+). The segment at 398 to 401 (DLPG) is G3 motif. The interval 467–470 (TKVD) is G4 motif. Residues K468, D470, T503, G506, and N507 each contribute to the GTP site. The interval 501–504 (VVTG) is G5 motif. Stalk region stretches follow at residues 589-836 (DRNE…IKDT) and 874-928 (CNDV…IKLL). The paddle region stretch occupies residues 736–856 (SDKQQWDAAI…KTALNHCNLC (121 aa)). Residues 771–781 (WKKRWLYWKNR) lie within the membrane without spanning it. Residues 782 to 960 (TQEQCVHNET…AFIEALHQEK (179 aa)) are Mitochondrial intermembrane-facing. C856 and C874 are joined by a disulfide. Residues 895-960 (RQQLTNTEVR…AFIEALHQEK (66 aa)) adopt a coiled-coil conformation.

Belongs to the TRAFAC class dynamin-like GTPase superfamily. Dynamin/Fzo/YdjA family. Oligomeric complex consisting of membrane-bound and soluble forms of OPA1. Interacts with RCC1L; RCC1L acts as a guanine nucleotide exchange factor (GEF) for OPA1 by exchanging bound GDP for free GTP. Interacts with CHCHD3 and IMMT; these interactions occur preferentially with soluble OPA1 forms. Interacts with PRELID1. Post-translationally, cleaved by OMA1 or YME1L downstream of the transmembrane region in response to different signals to generate soluble forms. Cleaved by OMA1 at position S1 following stress conditions, generating the short soluble form (Dynamin-like GTPase OPA1, short form; S-OPA1). AFG3L2 is involved in the regulation of OMA1-dependent processing of OPA1. PARL-dependent proteolytic processing releases an antiapoptotic soluble form not required for mitochondrial fusion. In terms of processing, cleavage at position S2 by YME1L is required to mediate oxidative phosphorylation (OXPHOS)-induced mitochondrial fusion. Cleavage occurs in the sequence motif Leu-Gln-Gln-Gln-Ile-Gln (LQQQIQ). Cleavage at position S2 by YME1L is required to mediate oxidative phosphorylation (OXPHOS)-induced mitochondrial fusion. Cleavage occurs in the sequence motif Leu-Gln-Gln-Gln-Ile-Gln (LQQQIQ). Cleavage at position S3 by YME1L is required for membrane tubulation. Post-translationally, cleavage at position S3 by YME1L is required for membrane tubulation. In terms of tissue distribution, highly expressed in retina. Also expressed in brain, testis, heart and skeletal muscle. Low levels of all isoforms expressed in a variety of tissues. Expressed in retina, skeletal muscle, heart, lung, ovary, colon, thyroid gland, leukocytes and fetal brain. Low levels of all isoforms expressed in a variety of tissues. As to expression, isoform 2 expressed in colon, liver, kidney, thyroid gland and leukocytes.

The protein localises to the mitochondrion inner membrane. The protein resides in the mitochondrion intermembrane space. The enzyme catalyses GTP + H2O = GDP + phosphate + H(+). Its activity is regulated as follows. Activated by guanine nucleotide exchange factor RCC1L. Functionally, dynamin-related GTPase that is essential for normal mitochondrial morphology by mediating fusion of the mitochondrial inner membranes, regulating cristae morphology and maintaining respiratory chain function. Exists in two forms: the transmembrane, long form (Dynamin-like GTPase OPA1, long form; L-OPA1), which is tethered to the inner mitochondrial membrane, and the short soluble form (Dynamin-like GTPase OPA1, short form; S-OPA1), which results from proteolytic cleavage and localizes in the intermembrane space. Both forms (L-OPA1 and S-OPA1) cooperate to catalyze the fusion of the mitochondrial inner membrane. The equilibrium between L-OPA1 and S-OPA1 is essential: excess levels of S-OPA1, produced by cleavage by OMA1 following loss of mitochondrial membrane potential, lead to an impaired equilibrium between L-OPA1 and S-OPA1, inhibiting mitochondrial fusion. The balance between L-OPA1 and S-OPA1 also influences cristae shape and morphology. Involved in remodeling cristae and the release of cytochrome c during apoptosis. Proteolytic processing by PARL in response to intrinsic apoptotic signals may lead to disassembly of OPA1 oligomers and release of the caspase activator cytochrome C (CYCS) into the mitochondrial intermembrane space. Acts as a regulator of T-helper Th17 cells, which are characterized by cells with fused mitochondria with tight cristae, by mediating mitochondrial membrane remodeling: OPA1 is required for interleukin-17 (IL-17) production. Its role in mitochondrial morphology is required for mitochondrial genome maintenance. Constitutes the transmembrane long form (L-OPA1) that plays a central role in mitochondrial inner membrane fusion and cristae morphology. L-OPA1 and the soluble short form (S-OPA1) form higher-order helical assemblies that coordinate the fusion of mitochondrial inner membranes. Inner membrane-anchored L-OPA1 molecules initiate membrane remodeling by recruiting soluble S-OPA1 to rapidly polymerize into a flexible cylindrical scaffold encaging the mitochondrial inner membrane. Once at the membrane surface, the formation of S-OPA1 helices induce bilayer curvature. OPA1 dimerization through the paddle region, which inserts into cardiolipin-containing membrane, promotes GTP hydrolysis and the helical assembly of a flexible OPA1 lattice on the membrane, which drives membrane curvature and mitochondrial fusion. Plays a role in the maintenance and remodeling of mitochondrial cristae, some invaginations of the mitochondrial inner membrane that provide an increase in the surface area. Probably acts by forming helical filaments at the inside of inner membrane tubes with the shape and dimensions of crista junctions. The equilibrium between L-OPA1 and S-OPA1 influences cristae shape and morphology: increased L-OPA1 levels promote cristae stacking and elongated mitochondria, while increased S-OPA1 levels correlated with irregular cristae packing and round mitochondria shape. Its function is as follows. Constitutes the soluble short form (S-OPA1) generated by cleavage by OMA1, which plays a central role in mitochondrial inner membrane fusion and cristae morphology. The transmembrane long form (L-OPA1) and the S-OPA1 form higher-order helical assemblies that coordinate the fusion of mitochondrial inner membranes. Inner membrane-anchored L-OPA1 molecules initiate membrane remodeling by recruiting soluble S-OPA1 to rapidly polymerize into a flexible cylindrical scaffold encaging the mitochondrial inner membrane. Once at the membrane surface, the formation of S-OPA1 helices induce bilayer curvature. OPA1 dimerization through the paddle region, which inserts into cardiolipin-containing membrane, promotes GTP hydrolysis and the helical assembly of a flexible OPA1 lattice on the membrane, which drives membrane curvature and mitochondrial fusion. Excess levels of S-OPA1 produced by cleavage by OMA1 following stress conditions that induce loss of mitochondrial membrane potential, lead to an impaired equilibrium between L-OPA1 and S-OPA1, thereby inhibiting mitochondrial fusion. Involved in mitochondrial safeguard in response to transient mitochondrial membrane depolarization by mediating flickering: cleavage by OMA1 leads to excess production of S-OPA1, preventing mitochondrial hyperfusion. Plays a role in the maintenance and remodeling of mitochondrial cristae, some invaginations of the mitochondrial inner membrane that provide an increase in the surface area. Probably acts by forming helical filaments at the inside of inner membrane tubes with the shape and dimensions of crista junctions. The equilibrium between L-OPA1 and S-OPA1 influences cristae shape and morphology: increased L-OPA1 levels promote cristae stacking and elongated mitochondria, while increased S-OPA1 levels correlated with irregular cristae packing and round mitochondria shape. In terms of biological role, coexpression of isoform 1 with shorter alternative products is required for optimal activity in promoting mitochondrial fusion. Functionally, isoforms that contain the alternative exon 4b are required for mitochondrial genome maintenance, possibly by anchoring the mitochondrial nucleoids to the inner mitochondrial membrane. The chain is Dynamin-like GTPase OPA1, mitochondrial from Homo sapiens (Human).